The sequence spans 358 residues: Ubiquitin thioesterase OTU1 (358 aa).

The Ubiquitin-like domain occupies phenylalanine 5–alanine 87. The segment at lysine 8–leucine 94 is UBX-like. Positions lysine 83–alanine 108 are disordered. Positions proline 89–threonine 102 are enriched in polar residues. An OTU domain is found at leucine 161–glutamate 285. A cys-loop region spans residues valine 166–cysteine 172. Aspartate 169 is a catalytic residue. The active-site Nucleophile is cysteine 172. Positions isoleucine 224 to isoleucine 234 are variable-loop. The interval phenylalanine 274–histidine 278 is his-loop. Isoleucine 277 serves as a coordination point for substrate. Histidine 278 is an active-site residue. The tract at residues methionine 301–glutamine 306 is S2 site. The segment at leucine 328–histidine 352 adopts a C2H2-type zinc-finger fold. Histidine 352 is a catalytic residue.

It carries out the reaction Thiol-dependent hydrolysis of ester, thioester, amide, peptide and isopeptide bonds formed by the C-terminal Gly of ubiquitin (a 76-residue protein attached to proteins as an intracellular targeting signal).. Functionally, hydrolase that can remove conjugated ubiquitin from proteins and may therefore play an important regulatory role at the level of protein turnover by preventing degradation. The polypeptide is Ubiquitin thioesterase OTU1 (Drosophila pseudoobscura pseudoobscura (Fruit fly)).